The following is a 589-amino-acid chain: Nicotinate phosphoribosyltransferase (589 aa).

The interval 1 to 30 (MSQSNTPLKRKKTENGYSENGSTTGATSNQ) is disordered. Polar residues predominate over residues 15–30 (NGYSENGSTTGATSNQ). The nicotinate site is built by Tyr-68 and Thr-256. His-259 carries the phosphohistidine modification. Arg-356 contacts nicotinate. Thr-418 contacts 5-phospho-alpha-D-ribose 1-diphosphate.

This sequence belongs to the NAPRTase family. Mg(2+) serves as cofactor. It depends on Mn(2+) as a cofactor. Post-translationally, transiently phosphorylated on a His residue during the reaction cycle. Phosphorylation strongly increases the affinity for substrates and increases the rate of nicotinate D-ribonucleotide production. Dephosphorylation regenerates the low-affinity form of the enzyme, leading to product release.

The enzyme catalyses nicotinate + 5-phospho-alpha-D-ribose 1-diphosphate + ATP + H2O = nicotinate beta-D-ribonucleotide + ADP + phosphate + diphosphate. Its pathway is cofactor biosynthesis; NAD(+) biosynthesis; nicotinate D-ribonucleotide from nicotinate: step 1/1. Catalyzes the first step in the biosynthesis of NAD from nicotinic acid, the ATP-dependent synthesis of beta-nicotinate D-ribonucleotide from nicotinate and 5-phospho-D-ribose 1-phosphate. Helps prevent cellular oxidative stress via its role in NAD biosynthesis. This is Nicotinate phosphoribosyltransferase (naprt) from Dictyostelium discoideum (Social amoeba).